The primary structure comprises 103 residues: Large ribosomal subunit protein uL23 (103 aa).

This sequence belongs to the universal ribosomal protein uL23 family. In terms of assembly, part of the 50S ribosomal subunit. Contacts protein L29, and trigger factor when it is bound to the ribosome.

Functionally, one of the early assembly proteins it binds 23S rRNA. One of the proteins that surrounds the polypeptide exit tunnel on the outside of the ribosome. Forms the main docking site for trigger factor binding to the ribosome. The chain is Large ribosomal subunit protein uL23 from Aquifex aeolicus (strain VF5).